The following is a 224-amino-acid chain: uncharacterized protein (224 aa).

Positions 44 to 139 are enriched in pro residues; it reads TSPPIVPLPT…PSPPPSPSPL (96 aa). Residues 44–145 form a disordered region; the sequence is TSPPIVPLPT…PSPLGEPMYY (102 aa).

This is an uncharacterized protein from Lepidoptera (butterflies and moths).